The sequence spans 92 residues: Small ribosomal subunit protein uS19c (92 aa).

It belongs to the universal ribosomal protein uS19 family.

It localises to the plastid. The protein localises to the chloroplast. Functionally, protein S19 forms a complex with S13 that binds strongly to the 16S ribosomal RNA. The chain is Small ribosomal subunit protein uS19c from Spirogyra maxima (Green alga).